We begin with the raw amino-acid sequence, 921 residues long: Isoleucine--tRNA ligase (921 aa).

The short motif at 57-67 (PYANGDIHMGH) is the 'HIGH' region element. Glu552 contributes to the L-isoleucyl-5'-AMP binding site. Positions 593-597 (KMSKS) match the 'KMSKS' region motif. ATP is bound at residue Lys596. Zn(2+) contacts are provided by Cys888, Cys891, Cys908, and Cys911.

Belongs to the class-I aminoacyl-tRNA synthetase family. IleS type 1 subfamily. In terms of assembly, monomer. Zn(2+) is required as a cofactor.

It localises to the cytoplasm. The enzyme catalyses tRNA(Ile) + L-isoleucine + ATP = L-isoleucyl-tRNA(Ile) + AMP + diphosphate. Functionally, catalyzes the attachment of isoleucine to tRNA(Ile). As IleRS can inadvertently accommodate and process structurally similar amino acids such as valine, to avoid such errors it has two additional distinct tRNA(Ile)-dependent editing activities. One activity is designated as 'pretransfer' editing and involves the hydrolysis of activated Val-AMP. The other activity is designated 'posttransfer' editing and involves deacylation of mischarged Val-tRNA(Ile). In Bacillus cereus (strain AH820), this protein is Isoleucine--tRNA ligase.